An 81-amino-acid polypeptide reads, in one-letter code: Defensin-like protein 313 (81 aa).

Positions 1–32 (MESKRSSSSPLLILITTIMIIFIISGPKSVDA) are cleaved as a signal peptide. 3 disulfides stabilise this stretch: cysteine 34-cysteine 63, cysteine 45-cysteine 74, and cysteine 49-cysteine 76.

The protein belongs to the DEFL family.

The protein resides in the secreted. This is Defensin-like protein 313 from Arabidopsis thaliana (Mouse-ear cress).